We begin with the raw amino-acid sequence, 440 residues long: NK1 transcription factor-related protein 1 (440 aa).

Positions 1–13 (MSTSGPAAPGDVP) are enriched in low complexity. 3 disordered regions span residues 1 to 82 (MSTS…RPTS), 145 to 291 (GVAA…PRRA), and 342 to 387 (KWKK…PMGA). The segment covering 14–31 (ALPPPPPGPGSGPAPPAP) has biased composition (pro residues). Composition is skewed to low complexity over residues 62-74 (VPAV…AARP) and 145-158 (GVAA…TSAG). Positions 170-181 (GYSSGSGRSPTA) are enriched in polar residues. The segment covering 182–198 (DSEDEAPEDEDEEEAPE) has biased composition (acidic residues). Over residues 210–222 (GGSGGLGARGSGC) the composition is skewed to gly residues. Residues 237 to 269 (AAPGPRGNSPGAPGPPATATGAGSAGSTPQGAA) show a composition bias toward low complexity. The segment at residues 288–347 (PRRARTAFTYEQLVALENKFKATRYLSVCERLNLALSLSLTETQVKIWFQNRRTKWKKQN) is a DNA-binding region (homeobox). Residues 356–374 (TGGGGGPGPGAGPGAGLPG) show a composition bias toward gly residues.

This sequence belongs to the NK-1 homeobox family.

It localises to the nucleus. May be required for the coordinated crosstalk of factors involved in the maintenance of energy homeostasis, possibly by regulating the transcription of specific factors involved in energy balance. This is NK1 transcription factor-related protein 1 from Mus musculus (Mouse).